A 361-amino-acid chain; its full sequence is uncharacterized protein (361 aa).

Disordered stretches follow at residues 53–75 and 150–211; these read KNIS…NINN and NYNN…YHHY. Residues 150 to 198 show a composition bias toward low complexity; that stretch reads NYNNYNNNNNNNNNNNNNNNNNNNNNNNNNNNNNNKNNNKNNNNKPNNF. Basic residues predominate over residues 199–211; the sequence is IHHHHHHHHYHHY. A helical transmembrane segment spans residues 225 to 245; sequence IFIGLMAFLILFILMVIGLLI.

It is found in the membrane. This is an uncharacterized protein from Dictyostelium discoideum (Social amoeba).